A 1700-amino-acid polypeptide reads, in one-letter code: Balbiani ring protein 3 (1700 aa).

Residues 1-20 (MKTLSSLLLVLAVNVLLIQA) form the signal peptide.

As to expression, salivary gland.

The protein localises to the secreted. In terms of biological role, used by the larvae to construct a supramolecular structure, the larval tube. Balbiani ring protein 3 could play a role as a transport protein that binds to other proteins intracellularly and in the gland lumen in order to prevent these from forming water-insoluble fibers too early. The chain is Balbiani ring protein 3 (BR3) from Chironomus tentans (Midge).